Reading from the N-terminus, the 441-residue chain is MSVTSTASSSRELRAGGGLSGTVRVPGDKSISHRALLFGAIAEGITTIEGLLPAEDPMSTAACLRAMGATISPIHAGQIVRVEGVGLDGLQEPQDVLDCGNSGTTIRLMLGLLAASKGRHFVLSGDSSLRRRPMNRVGQPLTMMGAKIKGRSNGDFAPLAVSGQKLRGGVIGTPVASAQVKSALLLAALTADGATTVIEPAHSRDHSERMLRAFGADLEVGGEMGRHIRVSPGQKLYGQNIVVPGDISSAAFWLVAGVLVPGAELVVENVGLNPTRTGILEVLQQMEARIEVLNRHEVAGEPVGDLRVRQGPLKPFSINGDIIPRLVDEVPILAVAACFCDGESKITDASELRVKETDRLAVMTRQLTAMGADIDEHADGLTIRGGRTLRGTELDSETDHRVAMSLAVAALLAEGNSRLTGSEAAAVSYPNFWDDLERLHR.

Over residues 1-10 (MSVTSTASSS) the composition is skewed to polar residues. The segment at 1-21 (MSVTSTASSSRELRAGGGLSG) is disordered. Residues lysine 29, serine 30, and arginine 34 each contribute to the 3-phosphoshikimate site. Residue lysine 29 participates in phosphoenolpyruvate binding. Residues glycine 103 and arginine 132 each coordinate phosphoenolpyruvate. 3-phosphoshikimate-binding residues include serine 177, glutamine 179, aspartate 328, and lysine 355. Glutamine 179 is a phosphoenolpyruvate binding site. Catalysis depends on aspartate 328, which acts as the Proton acceptor. Phosphoenolpyruvate is bound by residues arginine 359 and arginine 401.

It belongs to the EPSP synthase family. As to quaternary structure, monomer.

Its subcellular location is the cytoplasm. It catalyses the reaction 3-phosphoshikimate + phosphoenolpyruvate = 5-O-(1-carboxyvinyl)-3-phosphoshikimate + phosphate. It participates in metabolic intermediate biosynthesis; chorismate biosynthesis; chorismate from D-erythrose 4-phosphate and phosphoenolpyruvate: step 6/7. In terms of biological role, catalyzes the transfer of the enolpyruvyl moiety of phosphoenolpyruvate (PEP) to the 5-hydroxyl of shikimate-3-phosphate (S3P) to produce enolpyruvyl shikimate-3-phosphate and inorganic phosphate. The protein is 3-phosphoshikimate 1-carboxyvinyltransferase of Prochlorococcus marinus (strain MIT 9303).